The primary structure comprises 250 residues: 7-cyano-7-deazaguanine synthase (250 aa).

ATP is bound at residue 21-31 (FSGGQDSSVCL). Zn(2+) is bound by residues Cys209, Cys224, Cys227, and Cys230.

It belongs to the QueC family. It depends on Zn(2+) as a cofactor.

The catalysed reaction is 7-carboxy-7-deazaguanine + NH4(+) + ATP = 7-cyano-7-deazaguanine + ADP + phosphate + H2O + H(+). The protein operates within purine metabolism; 7-cyano-7-deazaguanine biosynthesis. Its function is as follows. Catalyzes the ATP-dependent conversion of 7-carboxy-7-deazaguanine (CDG) to 7-cyano-7-deazaguanine (preQ(0)). The protein is 7-cyano-7-deazaguanine synthase of Caulobacter sp. (strain K31).